We begin with the raw amino-acid sequence, 529 residues long: Lysine--tRNA ligase (529 aa).

The 'HIGH' region signature appears at 29 to 37 (ISGSVHIGN). A 'KMSKS' region motif is present at residues 274-278 (AMSKS). Lys-277 contributes to the ATP binding site.

It belongs to the class-I aminoacyl-tRNA synthetase family.

It is found in the cytoplasm. The enzyme catalyses tRNA(Lys) + L-lysine + ATP = L-lysyl-tRNA(Lys) + AMP + diphosphate. In Methanosphaera stadtmanae (strain ATCC 43021 / DSM 3091 / JCM 11832 / MCB-3), this protein is Lysine--tRNA ligase.